Reading from the N-terminus, the 422-residue chain is UDP-N-acetylglucosamine 1-carboxyvinyltransferase (422 aa).

A phosphoenolpyruvate-binding site is contributed by Lys-22–Asn-23. Arg-95 serves as a coordination point for UDP-N-acetyl-alpha-D-glucosamine. Cys-119 (proton donor) is an active-site residue. A 2-(S-cysteinyl)pyruvic acid O-phosphothioketal modification is found at Cys-119. Residues Arg-124 to Gln-128, Asp-309, and Val-331 contribute to the UDP-N-acetyl-alpha-D-glucosamine site.

Belongs to the EPSP synthase family. MurA subfamily.

It localises to the cytoplasm. It catalyses the reaction phosphoenolpyruvate + UDP-N-acetyl-alpha-D-glucosamine = UDP-N-acetyl-3-O-(1-carboxyvinyl)-alpha-D-glucosamine + phosphate. It participates in cell wall biogenesis; peptidoglycan biosynthesis. Cell wall formation. Adds enolpyruvyl to UDP-N-acetylglucosamine. This chain is UDP-N-acetylglucosamine 1-carboxyvinyltransferase, found in Anaeromyxobacter dehalogenans (strain 2CP-C).